Consider the following 285-residue polypeptide: Nickel/cobalt efflux system RcnA (285 aa).

Residues 1–10 lie on the Periplasmic side of the membrane; that stretch reads MTEFTTLLQQ. A helical transmembrane segment spans residues 11-31; it reads GSAWFFIPSAILLGALHGLEP. The Cytoplasmic segment spans residues 32–56; that stretch reads GHSKTMMAAFIIAIKGTIKQAVMLG. A helical transmembrane segment spans residues 57–77; that stretch reads LAATISHTAVVWLIAFGGMVI. The Periplasmic portion of the chain corresponds to 78–86; the sequence is SKRFTAQSA. The chain crosses the membrane as a helical span at residues 87-107; it reads EPWLQLISAVIIISTAFWMFW. Topologically, residues 108 to 185 are cytoplasmic; the sequence is RTWRGERNWL…FDGREVTNWQ (78 aa). Residues 127-164 are disordered; the sequence is HEHHHHDHEHHQDHDHDHDHEHHHHHEHGDNEEYQDAH. Composition is skewed to basic and acidic residues over residues 135–146 and 153–164; these read EHHQDHDHDHDH and EHGDNEEYQDAH. Residues 186-206 form a helical membrane-spanning segment; the sequence is ILLFGLTGGLIPCPAAITVLL. Residues 207 to 220 lie on the Periplasmic side of the membrane; the sequence is ICIQLKALTLGATL. Residues 221–241 traverse the membrane as a helical segment; the sequence is VVSFSIGLALTLVTVGVGAAI. The Cytoplasmic portion of the chain corresponds to 242–262; sequence SVQQVAKRWSGFNTLAKRAPY. The helical transmembrane segment at 263–283 threads the bilayer; it reads FSSLLIGLVGVYMGVHGFMGI. The Periplasmic segment spans residues 284 to 285; that stretch reads MR.

The protein belongs to the NiCoT transporter (TC 2.A.52) family. RcnA subfamily.

It is found in the cell inner membrane. In terms of biological role, efflux system for nickel and cobalt. The sequence is that of Nickel/cobalt efflux system RcnA (rcnA) from Shigella dysenteriae serotype 1 (strain Sd197).